A 104-amino-acid polypeptide reads, in one-letter code: Protein EPIDERMAL PATTERNING FACTOR 1 (104 aa).

A signal peptide spans 1-20 (MKSLLLLAFFLSFFFGSLLA). 4 disulfides stabilise this stretch: Cys60–Cys94, Cys64–Cys70, Cys67–Cys96, and Cys79–Cys88. The N-linked (GlcNAc...) asparagine glycan is linked to Asn98.

It belongs to the plant cysteine rich small secretory peptide family. Epidermal patterning factor subfamily. In terms of assembly, interacts with ERECTA and ERL1, but not with TMM. As to expression, expressed in shoots, but not in roots. Mostly localized in developing leaves, specifically in meristemoids, guard mother cells (GMCs), and young guard cells.

Its subcellular location is the secreted. Functionally, controls stomatal patterning. Regulates asymmetric cell division during guard cell differentiation. Mediates stomatal development inhibition. Not cleaved by the protease CRSP (AC Q9LNU1). MEPF1: mobile signal controlling stomatal development in a non-cell-autonomous manner. Uses ERL1 as major receptor. May act by competing with somatogen (AC Q9SV72) for the same receptor, TMM (AC Q9SSD1). The polypeptide is Protein EPIDERMAL PATTERNING FACTOR 1 (Arabidopsis thaliana (Mouse-ear cress)).